Consider the following 450-residue polypeptide: MYTKDTIVAIATPQGNGGIGIIRISGIDALAIAEKLTKKQLKPRYATFCNVYNDNEIIDHGIIIFFKAPLSYTGEDVVEIQAHGNPFILNLIIKAALNCGARMAKAGEFTERAFLNNKLDLAQAEAVADIINASSEIAAKSAAKSLQGDFSKEINNLLEKLIYLRMYVEASIDFPEEEINFLEDQKIHSSLEEIYKVILAVKNSCKQGVILAEGITLILVGKPNAGKSSLLNALAGKESAIVTSIAGTTRDIVKEHIQINGVPMHIIDTAGLRNSDDIIESEGIKRAIKKIQEADQVLFVTDDYTNSQVKFSDIKEIIPEFYDQIPKDIDITYVHNKIDLLKEVPHNHANHIYISAENNIGIDKLKEHILNKVGYTNQNESIYTARERHVTAINNAFEHIKLAKEQLELGNGELLAEELLIVQEYLNSITGEFSSDDLLGEIFSSFCIGK.

(6S)-5-formyl-5,6,7,8-tetrahydrofolate is bound by residues R23, E79, and K118. Residues 214–374 (GITLILVGKP…LKEHILNKVG (161 aa)) enclose the TrmE-type G domain. N224 lines the K(+) pocket. Residues 224 to 229 (NAGKSS), 243 to 249 (TSIAGTT), and 268 to 271 (DTAG) contribute to the GTP site. S228 is a Mg(2+) binding site. Positions 243, 245, and 248 each coordinate K(+). T249 contacts Mg(2+). K450 provides a ligand contact to (6S)-5-formyl-5,6,7,8-tetrahydrofolate.

It belongs to the TRAFAC class TrmE-Era-EngA-EngB-Septin-like GTPase superfamily. TrmE GTPase family. In terms of assembly, homodimer. Heterotetramer of two MnmE and two MnmG subunits. It depends on K(+) as a cofactor.

It is found in the cytoplasm. Functionally, exhibits a very high intrinsic GTPase hydrolysis rate. Involved in the addition of a carboxymethylaminomethyl (cmnm) group at the wobble position (U34) of certain tRNAs, forming tRNA-cmnm(5)s(2)U34. This Francisella tularensis subsp. tularensis (strain FSC 198) protein is tRNA modification GTPase MnmE.